A 356-amino-acid chain; its full sequence is Cytochrome b translation regulator cbp7 (356 aa).

As to quaternary structure, component of a complex, at least composed of cbp7 and cbp8.

It localises to the mitochondrion. Functionally, translation factor for cob1/cytochrome b; plays a role in cob1 mRNA stabilization and required for correct folding of the protein. The polypeptide is Cytochrome b translation regulator cbp7 (Schizosaccharomyces pombe (strain 972 / ATCC 24843) (Fission yeast)).